The primary structure comprises 620 residues: Transcription factor kayak (620 aa).

2 disordered regions span residues 1–36 and 184–288; these read MKVK…SNGV and SDTD…EKRR. Polar residues predominate over residues 184-194; the sequence is SDTDDSNASWN. Composition is skewed to low complexity over residues 201-233 and 249-266; these read GDTT…GANN and ANNN…PAAR. The bZIP domain maps to 284–347; the sequence is EEKRRIRRER…NQLKYVIEAH (64 aa). The segment at 286–305 is basic motif; the sequence is KRRIRRERNKAAAARCRKRR. Positions 312–340 are leucine-zipper; that stretch reads LTEEVDALVKKGDTLKAEITTLTELRNQL. Residues 375 to 414 are disordered; sequence STGGSSCGSVHSNHSHNNNNNNNNSNDSSSGTITGFDATL. Low complexity predominate over residues 377 to 405; it reads GGSSCGSVHSNHSHNNNNNNNNSNDSSSG. Phosphoserine is present on S422. Disordered stretches follow at residues 447-466 and 590-620; these read GLDS…AKRA and SGPL…LCPL.

Belongs to the bZIP family. Fos subfamily. Homodimer. Heterodimer with Jra. The kay-Jra heterodimer binds more stably to the AP-1 site than either of the two proteins alone.

Its subcellular location is the nucleus. Developmentally regulated transcription factor AP-1 binds and recognizes the enhancer DNA sequence: 5'-TGA[CG]TCA-3'. May play a role in the function or determination of a particular subset of cells in the developing embryo. It is able to carry out its function either independently of or in conjunction with Jra. This is Transcription factor kayak from Drosophila willistoni (Fruit fly).